Reading from the N-terminus, the 527-residue chain is Heat shock factor protein HSF8 (527 aa).

Over residues 1-13 (MEPNSSGSGKAAV) the composition is skewed to low complexity. 5 disordered regions span residues 1 to 37 (MEPN…PSAN), 130 to 160 (RRKP…HSAS), 243 to 275 (NESN…ADGQ), 300 to 343 (SPRL…TSGK), and 476 to 501 (QSPS…QING). The span at 25-37 (QPAPAPAPMPSAN) shows a compositional bias: pro residues. Residues 39–133 (PPPFLVKTYD…LLKSISRRKP (95 aa)) mediate DNA binding. The span at 136-157 (GHAQQQQQPHGHAQQQMQPPGH) shows a compositional bias: low complexity. Polar residues-rich tracts occupy residues 319-328 (SPQSNASSGR) and 491-501 (NTSETKPQING).

The protein belongs to the HSF family. Homotrimer. Exhibits temperature-dependent phosphorylation.

The protein resides in the nucleus. Its function is as follows. DNA-binding protein that specifically binds heat shock promoter elements (HSE) and activates transcription. This is Heat shock factor protein HSF8 (HSF8) from Solanum peruvianum (Peruvian tomato).